The chain runs to 463 residues: Cysteine--tRNA ligase (463 aa).

C27 contributes to the Zn(2+) binding site. Positions 29-39 (ATVQGLPHIGH) match the 'HIGH' region motif. Residues C205, H230, and E234 each contribute to the Zn(2+) site. Residues 261–265 (KMSKS) carry the 'KMSKS' region motif. Residue K264 participates in ATP binding.

Belongs to the class-I aminoacyl-tRNA synthetase family. In terms of assembly, monomer. Zn(2+) serves as cofactor.

It is found in the cytoplasm. The enzyme catalyses tRNA(Cys) + L-cysteine + ATP = L-cysteinyl-tRNA(Cys) + AMP + diphosphate. This chain is Cysteine--tRNA ligase, found in Mycolicibacterium vanbaalenii (strain DSM 7251 / JCM 13017 / BCRC 16820 / KCTC 9966 / NRRL B-24157 / PYR-1) (Mycobacterium vanbaalenii).